The sequence spans 474 residues: tRNA-2-methylthio-N(6)-dimethylallyladenosine synthase (474 aa).

One can recognise an MTTase N-terminal domain in the interval 3–120; the sequence is KKLHIKTWGC…LPDMIEQVRR (118 aa). Residues cysteine 12, cysteine 49, cysteine 83, cysteine 157, cysteine 161, and cysteine 164 each coordinate [4Fe-4S] cluster. One can recognise a Radical SAM core domain in the interval 143 to 375; it reads RAEGPTAFVS…QDRITQQAMR (233 aa). In terms of domain architecture, TRAM spans 378–441; it reads RHMMGTVQRI…TNSLRGKFIR (64 aa).

The protein belongs to the methylthiotransferase family. MiaB subfamily. In terms of assembly, monomer. [4Fe-4S] cluster serves as cofactor.

Its subcellular location is the cytoplasm. It catalyses the reaction N(6)-dimethylallyladenosine(37) in tRNA + (sulfur carrier)-SH + AH2 + 2 S-adenosyl-L-methionine = 2-methylsulfanyl-N(6)-dimethylallyladenosine(37) in tRNA + (sulfur carrier)-H + 5'-deoxyadenosine + L-methionine + A + S-adenosyl-L-homocysteine + 2 H(+). Catalyzes the methylthiolation of N6-(dimethylallyl)adenosine (i(6)A), leading to the formation of 2-methylthio-N6-(dimethylallyl)adenosine (ms(2)i(6)A) at position 37 in tRNAs that read codons beginning with uridine. This chain is tRNA-2-methylthio-N(6)-dimethylallyladenosine synthase, found in Shewanella sp. (strain W3-18-1).